The primary structure comprises 300 residues: Glutamyl-Q tRNA(Asp) synthetase (300 aa).

Residues 14–18 (RFAPT) and Glu-50 contribute to the L-glutamate site. The short motif at 17–27 (PTPSGFLHFGS) is the 'HIGH' region element. Positions 106, 108, 120, and 124 each coordinate Zn(2+). Residues Tyr-177 and Arg-195 each contribute to the L-glutamate site. Positions 233 to 237 (KLGKS) match the 'KMSKS' region motif. Lys-236 provides a ligand contact to ATP.

It belongs to the class-I aminoacyl-tRNA synthetase family. GluQ subfamily. It depends on Zn(2+) as a cofactor.

In terms of biological role, catalyzes the tRNA-independent activation of glutamate in presence of ATP and the subsequent transfer of glutamate onto a tRNA(Asp). Glutamate is transferred on the 2-amino-5-(4,5-dihydroxy-2-cyclopenten-1-yl) moiety of the queuosine in the wobble position of the QUC anticodon. The protein is Glutamyl-Q tRNA(Asp) synthetase of Pseudomonas putida (strain ATCC 47054 / DSM 6125 / CFBP 8728 / NCIMB 11950 / KT2440).